The following is a 157-amino-acid chain: MIITAIDTNIYDQPEFVEGRDVIGVRFEDLVLDKRIQRVALSGGEELGLRLNHGHPILREGDVLKADDKTVFVVEIIPTDVLVITPSDIHQMGFVAHSLGNRHLPAQFSKPGELTEKAAMIVQYDHTVVSFLDDHDIEYQRTELVPPIPFRHSGHTH.

Belongs to the UreE family.

It localises to the cytoplasm. Involved in urease metallocenter assembly. Binds nickel. Probably functions as a nickel donor during metallocenter assembly. The protein is Urease accessory protein UreE of Corynebacterium glutamicum (strain R).